Reading from the N-terminus, the 393-residue chain is 6-hydroxy-3-succinoylpyridine 3-monooxygenase HspB (393 aa).

Residues 6–35 and 277–287 contribute to the FAD site; these read RVII…VLEA and MRNGRVILIGD.

It belongs to the PheA/TfdB FAD monooxygenase family. Homodimer. It depends on FAD as a cofactor.

The catalysed reaction is 4-(6-hydroxypyridin-3-yl)-4-oxobutanoate + 2 NADH + O2 + 2 H(+) = 2,5-dihydroxypyridine + succinate semialdehyde + 2 NAD(+) + H2O. It participates in alkaloid degradation; nicotine degradation. Its activity is regulated as follows. Inhibited by Cu(2+) and Zn(2+). Its function is as follows. Involved in the nicotine degradation. Catalyzes the cleavage of 6-hydroxy-3-succinoylpyridine (HSP) by incorporation of oxygen at the 3-position to produce to 2,5-dihydroxypyridine (DHP) and succinic semialdehyde. The protein is 6-hydroxy-3-succinoylpyridine 3-monooxygenase HspB of Pseudomonas putida (strain DSM 28022 / S16).